The chain runs to 146 residues: Large-conductance mechanosensitive channel (146 aa).

3 helical membrane-spanning segments follow: residues 21 to 41, 44 to 64, and 83 to 103; these read VGIIIGAAFTGIVSSLVADLI, IIGLITGGIDFSNLFVNLGDG, and GSFITAVINFLIIAWVVFLLV.

This sequence belongs to the MscL family. As to quaternary structure, homopentamer.

It localises to the cell inner membrane. In terms of biological role, channel that opens in response to stretch forces in the membrane lipid bilayer. May participate in the regulation of osmotic pressure changes within the cell. The polypeptide is Large-conductance mechanosensitive channel (Cereibacter sphaeroides (strain ATCC 17023 / DSM 158 / JCM 6121 / CCUG 31486 / LMG 2827 / NBRC 12203 / NCIMB 8253 / ATH 2.4.1.) (Rhodobacter sphaeroides)).